The chain runs to 173 residues: Co-chaperone protein HscB homolog (173 aa).

A J domain is found at 5–77; sequence CHFALFDLQP…SQRARYLLAL (73 aa).

The protein belongs to the HscB family. In terms of assembly, interacts with HscA and stimulates its ATPase activity.

Co-chaperone involved in the maturation of iron-sulfur cluster-containing proteins. Seems to help targeting proteins to be folded toward HscA. This Ectopseudomonas mendocina (strain ymp) (Pseudomonas mendocina) protein is Co-chaperone protein HscB homolog.